A 127-amino-acid chain; its full sequence is Protein pkiA (127 aa).

In terms of domain architecture, HIT spans 16 to 127 (IFAKIISGAI…GGRQMNWPPG (112 aa)).

The polypeptide is Protein pkiA (pkiA) (Dictyostelium discoideum (Social amoeba)).